We begin with the raw amino-acid sequence, 592 residues long: MTLFILTETSAGYALLKAKDKKLLKRDDLATEAATAEGVSNLVKLKSFQKFDSAAAALEEVASLVEGKVTPRLASLLDEIKDEKKVSLAVADPKLGNAIGKLPGLDIQLIADSTTADIYRAIREHLPTLIPGLLPQDMSTMSLGLSHSLARHKLKFSPDKIDTMIVQAIGLLDDLDKELNTYAMRVKEWYGWHFPELAKILNDNIAYARLVLKMGMRSNWETSDLAEILPEELEGPVKAAADRSMGTEISQDDLENIQALAEQVVGFAEYRQQLAGYLTARMNAIAPNLTALVGDLVGARLIAHAGSLTNLSKSPASTIQILGAEKALFRALKTKHDTPKYGLIYHASLIGQATGKNKGKMARVLAAKASLGIRVDALADWEDDATEEDKAALGTEARYNLERKLAAMEGKPLKPRGVAIAPNGASAQPKKFELNEARKYNADADALSSDEPKSKKDKKLIEEVSDEEMADADSDEEPAANGTKDDDSSDDSEEEKSKKHKSKKGKDAELEKLAERAGLSLKRYKRKLERGEITFDADGNPTAVSKKDLKKAKKEAKKASKGDEKKRKRSDDGEEVDNAEKKQKKKKKKGEE.

Residues 285–410 form the Nop domain; the sequence is IAPNLTALVG…LERKLAAMEG (126 aa). Positions 443 to 592 are disordered; it reads DADALSSDEP…QKKKKKKGEE (150 aa). Positions 450–462 are enriched in basic and acidic residues; it reads DEPKSKKDKKLIE. Acidic residues predominate over residues 463 to 478; it reads EVSDEEMADADSDEEP. Basic and acidic residues-rich tracts occupy residues 505 to 515 and 557 to 571; these read GKDAELEKLAE and KKASKGDEKKRKRSD. Basic residues predominate over residues 582–592; sequence KQKKKKKKGEE.

Belongs to the NOP5/NOP56 family.

The protein resides in the nucleus. The protein localises to the nucleolus. Functionally, required for pre-18S rRNA processing. May bind microtubules. The sequence is that of Nucleolar protein 58 (nop58) from Aspergillus clavatus (strain ATCC 1007 / CBS 513.65 / DSM 816 / NCTC 3887 / NRRL 1 / QM 1276 / 107).